The primary structure comprises 119 residues: Large ribosomal subunit protein bL19 (119 aa).

This sequence belongs to the bacterial ribosomal protein bL19 family.

Functionally, this protein is located at the 30S-50S ribosomal subunit interface and may play a role in the structure and function of the aminoacyl-tRNA binding site. This Limosilactobacillus fermentum (strain NBRC 3956 / LMG 18251) (Lactobacillus fermentum) protein is Large ribosomal subunit protein bL19.